We begin with the raw amino-acid sequence, 529 residues long: Peptide chain release factor 3 (529 aa).

Positions 11–280 constitute a tr-type G domain; the sequence is KKRRTFAIIS…GLVEWAPAPL (270 aa). GTP contacts are provided by residues 20–27, 88–92, and 142–145; these read SHPDAGKT, DTPGH, and NKLD.

The protein belongs to the TRAFAC class translation factor GTPase superfamily. Classic translation factor GTPase family. PrfC subfamily.

Its subcellular location is the cytoplasm. Increases the formation of ribosomal termination complexes and stimulates activities of RF-1 and RF-2. It binds guanine nucleotides and has strong preference for UGA stop codons. It may interact directly with the ribosome. The stimulation of RF-1 and RF-2 is significantly reduced by GTP and GDP, but not by GMP. The chain is Peptide chain release factor 3 from Alteromonas mediterranea (strain DSM 17117 / CIP 110805 / LMG 28347 / Deep ecotype).